The primary structure comprises 301 residues: MRHWRRKAMLATLPVIRDKSVRTPWREFWRRFLRQHVAVAAGLFVLLLIAIAFWAQYLMPYDAENYFDYDRLNEGPSSAHWLGVDSLGRDIFSRILMGTRISLAAGIFSVLVGMMIGTTLGLLAGYYEGWADRIIMRICDVLFAFPGILLAIAVVAIMGSGMANVVVAVAIFSIPAFARLVRGNTLVLKQLTYIESARSMGANDWTILFRHILPGSVSSIVVFFSMRIGMSIITAASLSFLGLGAQPPMPEWGAMLNEARSDMVIAPHVAIFPSLAIFLTVLAFNLLGDGLRDALDPKLKS.

6 helical membrane-spanning segments follow: residues 37–57 (VAVAAGLFVLLLIAIAFWAQY), 103–123 (LAAGIFSVLVGMMIGTTLGLL), 141–161 (VLFAFPGILLAIAVVAIMGSG), 162–182 (MANVVVAVAIFSIPAFARLVR), 220–240 (IVVFFSMRIGMSIITAASLSF), and 264–284 (VIAPHVAIFPSLAIFLTVLAF). The region spanning 99-288 (TRISLAAGIF…LTVLAFNLLG (190 aa)) is the ABC transmembrane type-1 domain.

It belongs to the binding-protein-dependent transport system permease family. As to quaternary structure, the complex is composed of two ATP-binding proteins (GsiA), two transmembrane proteins (GsiC and GsiD) and a solute-binding protein (GsiB).

It localises to the cell inner membrane. Its function is as follows. Part of the ABC transporter complex GsiABCD involved in glutathione import. Probably responsible for the translocation of the substrate across the membrane. The protein is Glutathione transport system permease protein GsiD of Pectobacterium atrosepticum (strain SCRI 1043 / ATCC BAA-672) (Erwinia carotovora subsp. atroseptica).